Consider the following 148-residue polypeptide: Glutamate mutase sigma subunit 2 (148 aa).

In terms of domain architecture, B12-binding spans 1-134 (MRTVILGVIG…EALKADLGHR (134 aa)). Adenosylcob(III)alamin-binding positions include 11–15 (SDAHV), H14, 59–61 (SSL), and 90–94 (NLAVG). Basic and acidic residues predominate over residues 129 to 141 (ADLGHRSREEASS). The disordered stretch occupies residues 129 to 148 (ADLGHRSREEASSEKVQLGS).

Belongs to the methylaspartate mutase GlmS subunit family. In terms of assembly, heterotetramer composed of 2 epsilon subunits (GlmE) and 2 sigma subunits (GlmS). GlmE exists as a homodimer and GlmS as a monomer. Adenosylcob(III)alamin is required as a cofactor.

It catalyses the reaction (2S,3S)-3-methyl-L-aspartate = L-glutamate. It participates in amino-acid degradation; L-glutamate degradation via mesaconate pathway; acetate and pyruvate from L-glutamate: step 1/4. Catalyzes the carbon skeleton rearrangement of L-glutamate to L-threo-3-methylaspartate ((2S,3S)-3-methylaspartate). This is Glutamate mutase sigma subunit 2 from Haloarcula marismortui (strain ATCC 43049 / DSM 3752 / JCM 8966 / VKM B-1809) (Halobacterium marismortui).